We begin with the raw amino-acid sequence, 341 residues long: Phenylalanine--tRNA ligase alpha subunit (341 aa).

Glu-256 provides a ligand contact to Mg(2+).

This sequence belongs to the class-II aminoacyl-tRNA synthetase family. Phe-tRNA synthetase alpha subunit type 1 subfamily. In terms of assembly, tetramer of two alpha and two beta subunits. Mg(2+) is required as a cofactor.

It is found in the cytoplasm. It carries out the reaction tRNA(Phe) + L-phenylalanine + ATP = L-phenylalanyl-tRNA(Phe) + AMP + diphosphate + H(+). The chain is Phenylalanine--tRNA ligase alpha subunit from Chlamydia caviae (strain ATCC VR-813 / DSM 19441 / 03DC25 / GPIC) (Chlamydophila caviae).